The sequence spans 570 residues: Membrane protein insertase YidC (570 aa).

The span at 31-60 (QQPVAQTPSVTIDSNGADSSALLNSPNTGE) shows a compositional bias: polar residues. Positions 31–79 (QQPVAQTPSVTIDSNGADSSALLNSPNTGELDTPETASKPATAEDSNIS) are disordered. The next 5 helical transmembrane spans lie at 230-250 (PTFSGGFGAASFLGAVVSTPE), 378-398 (WGIAIILLTVLIKALFFHLSA), 444-464 (LGGCLPMLVQMPVFISLYWVL), 487-507 (PYFVLPLLMGAAMFLQTSLNP), and 522-542 (PIIFTVFFLWFPAGLVLYWLV).

This sequence belongs to the OXA1/ALB3/YidC family. Type 1 subfamily. In terms of assembly, interacts with the Sec translocase complex via SecD. Specifically interacts with transmembrane segments of nascent integral membrane proteins during membrane integration.

The protein resides in the cell inner membrane. Required for the insertion and/or proper folding and/or complex formation of integral membrane proteins into the membrane. Involved in integration of membrane proteins that insert both dependently and independently of the Sec translocase complex, as well as at least some lipoproteins. Aids folding of multispanning membrane proteins. This Hahella chejuensis (strain KCTC 2396) protein is Membrane protein insertase YidC.